The primary structure comprises 115 residues: Nitrogen regulatory protein P-II 2 (115 aa).

Tyrosine 54 carries the post-translational modification O-UMP-tyrosine.

The protein belongs to the P(II) protein family.

Could be involved in the regulation of nitrogen fixation. This Methanothermobacter thermautotrophicus (strain ATCC 29096 / DSM 1053 / JCM 10044 / NBRC 100330 / Delta H) (Methanobacterium thermoautotrophicum) protein is Nitrogen regulatory protein P-II 2.